The chain runs to 546 residues: ATP synthase subunit alpha (546 aa).

ATP is bound at residue 172–179 (GDRKTGKT). 2 stretches are compositionally biased toward polar residues: residues 511 to 520 (FRTTEGNNLG) and 536 to 546 (TELNVSRKTAK). The interval 511-546 (FRTTEGNNLGTEAPVDPLAADDVNKTELNVSRKTAK) is disordered.

It belongs to the ATPase alpha/beta chains family. F-type ATPases have 2 components, CF(1) - the catalytic core - and CF(0) - the membrane proton channel. CF(1) has five subunits: alpha(3), beta(3), gamma(1), delta(1), epsilon(1). CF(0) has three main subunits: a(1), b(2) and c(9-12). The alpha and beta chains form an alternating ring which encloses part of the gamma chain. CF(1) is attached to CF(0) by a central stalk formed by the gamma and epsilon chains, while a peripheral stalk is formed by the delta and b chains.

The protein localises to the cell membrane. The enzyme catalyses ATP + H2O + 4 H(+)(in) = ADP + phosphate + 5 H(+)(out). In terms of biological role, produces ATP from ADP in the presence of a proton gradient across the membrane. The alpha chain is a regulatory subunit. This chain is ATP synthase subunit alpha, found in Corynebacterium aurimucosum (strain ATCC 700975 / DSM 44827 / CIP 107346 / CN-1) (Corynebacterium nigricans).